The following is a 281-amino-acid chain: 4-diphosphocytidyl-2-C-methyl-D-erythritol kinase (281 aa).

Residue K11 is part of the active site. 95 to 105 (PVAAGLGGGSS) provides a ligand contact to ATP. The active site involves D137.

The protein belongs to the GHMP kinase family. IspE subfamily.

It catalyses the reaction 4-CDP-2-C-methyl-D-erythritol + ATP = 4-CDP-2-C-methyl-D-erythritol 2-phosphate + ADP + H(+). It functions in the pathway isoprenoid biosynthesis; isopentenyl diphosphate biosynthesis via DXP pathway; isopentenyl diphosphate from 1-deoxy-D-xylulose 5-phosphate: step 3/6. Its function is as follows. Catalyzes the phosphorylation of the position 2 hydroxy group of 4-diphosphocytidyl-2C-methyl-D-erythritol. The chain is 4-diphosphocytidyl-2-C-methyl-D-erythritol kinase from Geobacter metallireducens (strain ATCC 53774 / DSM 7210 / GS-15).